Here is a 351-residue protein sequence, read N- to C-terminus: Fructose-1,6-bisphosphatase class 1 1 (351 aa).

Mg(2+)-binding residues include E84, D106, L108, and D109. Residues D109–S112 and N205 each bind substrate. E277 provides a ligand contact to Mg(2+).

This sequence belongs to the FBPase class 1 family. Homotetramer. Mg(2+) serves as cofactor.

The protein localises to the cytoplasm. It carries out the reaction beta-D-fructose 1,6-bisphosphate + H2O = beta-D-fructose 6-phosphate + phosphate. The protein operates within carbohydrate biosynthesis; Calvin cycle. The chain is Fructose-1,6-bisphosphatase class 1 1 from Methylibium petroleiphilum (strain ATCC BAA-1232 / LMG 22953 / PM1).